The following is a 349-amino-acid chain: Transcription factor HBP-1a (349 aa).

Over residues 1 to 11 (MGSNDPSTPSK) the composition is skewed to polar residues. 4 disordered regions span residues 1–39 (MGSNDPSTPSKASKPPEQEQPPATTSGTTAPVYPEWPGF), 101–196 (FHYP…NKPM), 224–277 (GATG…QAEC), and 312–349 (NTSLKAKLGESGGGGGSDAVPDMNERGDTNGGSHQKEP). Positions 113 to 124 (PAGAQGAAPGAA) are enriched in low complexity. Positions 174-191 (NENGSAQNGVSHSSSHGT) are enriched in polar residues. The bZIP domain maps to 252 to 315 (ELKKQKRKLS…EELLSKNTSL (64 aa)). The segment at 254–273 (KKQKRKLSNRESARRSRLRK) is basic motif. Residues 261–277 (SNRESARRSRLRKQAEC) show a composition bias toward basic and acidic residues. The tract at residues 280-315 (LGQRAEALKSENSSLRIELDRIKKEYEELLSKNTSL) is leucine-zipper. Basic and acidic residues predominate over residues 334–349 (MNERGDTNGGSHQKEP).

The protein belongs to the bZIP family. Binds DNA as a dimer.

The protein resides in the nucleus. Binds to the hexamer motif 5'-ACGTCA-3' of histone gene promoters. The protein is Transcription factor HBP-1a of Triticum aestivum (Wheat).